We begin with the raw amino-acid sequence, 474 residues long: Sialyltransferase-like protein 1 (474 aa).

Residues 1 to 14 (MRSHQAGRKLPLLQ) are Cytoplasmic-facing. Residues 15–35 (LLGCVAVFSVFVFTIQSSFFA) form a helical; Signal-anchor for type II membrane protein membrane-spanning segment. Over 36–474 (DNNRKLDLQP…CVRHPLKLDT (439 aa)) the chain is Lumenal. 4 N-linked (GlcNAc...) asparagine glycosylation sites follow: N88, N120, N155, and N243. Residues 376-421 (RLQRSQQPTSSKRDGSGQFGNCKVWGDADPTKGPVSGSPDMSETRK) form a disordered region.

It belongs to the glycosyltransferase 29 family. In terms of tissue distribution, highly expressed in inflorescences and siliques and at lower levels in roots, leaves and stems.

It is found in the golgi apparatus membrane. Required for normal pollen grain germination and pollen tube growth. May not be required for pollen development and female gametophytic function. This is Sialyltransferase-like protein 1 from Arabidopsis thaliana (Mouse-ear cress).